Consider the following 151-residue polypeptide: MINSSSKKNLISTFSSMFTICIVMIFVTCYETFQQDGEPFPIRGPLTRITVKNNNDYLLGIHCKSKDDDLGFHIHKEGELYGWKFHVNFQNSTLYFCGFSQGQDNKGVFDIDRAERDFYRCRNCTWNAKKDSLYGYSNLPQTVTWFFKWLK.

N-linked (GlcNAc...) asparagine glycosylation is found at Asn-91 and Asn-123.

It belongs to the plant self-incompatibility (S1) protein family.

The protein localises to the secreted. The chain is S-protein homolog 27 from Arabidopsis thaliana (Mouse-ear cress).